The following is a 198-amino-acid chain: Na(+)-translocating NADH-quinone reductase subunit E (198 aa).

6 helical membrane-spanning segments follow: residues 11–31 (SIFIENLALSFFLGMCTFLAV), 39–59 (MGLGIAVIVVQTVAVPANNLI), 77–97 (FLSFITFIGVIAALVQILEMA), 110–130 (GIFLPLITVNCAIFGGVSFMV), 140–160 (VVYGVGSGAGWMLAIVAMAGI), and 176–196 (LGITFITAGLMALGFMSFSGI).

This sequence belongs to the NqrDE/RnfAE family. Composed of six subunits; NqrA, NqrB, NqrC, NqrD, NqrE and NqrF.

It is found in the cell inner membrane. The enzyme catalyses a ubiquinone + n Na(+)(in) + NADH + H(+) = a ubiquinol + n Na(+)(out) + NAD(+). Functionally, NQR complex catalyzes the reduction of ubiquinone-1 to ubiquinol by two successive reactions, coupled with the transport of Na(+) ions from the cytoplasm to the periplasm. NqrA to NqrE are probably involved in the second step, the conversion of ubisemiquinone to ubiquinol. This Aeromonas salmonicida (strain A449) protein is Na(+)-translocating NADH-quinone reductase subunit E.